The sequence spans 203 residues: MKKTFVKKAMLTTAAMTSAALLTFGPDAASAKTPVDNTAVQLQHQASTNEDLNTFIDILNQCIYEQDGVYYFDSEKAVELGMTKEEAQVIATLWESTSEFFSIVSQCVYLEDGNYKFDTEKAVELGFTEKEALALEQFFSAVSLKIHILQAAIVLQDDVYSYDKDAALQAGATPLQADVYEKLFSALSQEQLAAIYDMIHPQA.

Positions 1 to 31 (MKKTFVKKAMLTTAAMTSAALLTFGPDAASA) are cleaved as a signal peptide.

This is an uncharacterized protein from Bacillus subtilis (strain 168).